A 386-amino-acid polypeptide reads, in one-letter code: MEDDAPVIYGLEFQARALTPQTAETDAIRFLVGTQSLKYDNQIHIIDFDDENNIINKNVLLHQAGEIWHISASPADKGVLATCYNKTSDSRVQACAAVWRMPKELESGSHESPEDPASTAQTLELLCHLDNGAQGNVACVVWEPMGDGKKVISLADSHILLWDLQPSSSQAVLASSAALEGRGQLKFTSGRWSPHHNCTQVATASDTTLRGWDTRSMSQIYCIENAHGQLVRDLDFNPNKQYYLASCGDDCKVKFWDTRNVTEPVKTLEEHSHWVWSVRYNHSHDQLVLTGSSDSRVILSNMVSISSEPFGHLVDDDDVSDPEEHHTEKSKEPLQDNVIATYEEHEDSVYAVDWASADPWLFASLSYDGRLVINRVPRALKYHILL.

Met-1 carries the post-translational modification N-acetylmethionine. 4 WD repeats span residues 132–172 (GAQG…SQAV), 182–222 (RGQL…QIYC), 226–266 (AHGQ…EPVK), and 270–310 (EHSH…SEPF). Positions 312 to 332 (HLVDDDDVSDPEEHHTEKSKE) are disordered. Ser-320 carries the phosphoserine modification. Residues 322–332 (PEEHHTEKSKE) are compositionally biased toward basic and acidic residues. One copy of the WD 5 repeat lies at 344–384 (EHEDSVYAVDWASADPWLFASLSYDGRLVINRVPRALKYHI).

This sequence belongs to the WD repeat EIPR1 family. In terms of assembly, interacts with two multisubunit tethering complexes: EARP composed of VPS50, VPS51, VPS52 and VPS53 subunits and GARP complex composed of VPS51, VPS52, VPS53 and VPS54 subunits. Interacts with SNAP29. In terms of tissue distribution, ubiquitous. Highly expressed in brain, adipose tissue, spleen and kidney (at protein level).

It is found in the golgi apparatus. Its subcellular location is the trans-Golgi network. Acts as a component of endosomal retrieval machinery that is involved in protein transport from early endosomes to either recycling endosomes or the trans-Golgi network. Mediates the recruitment of Golgi-associated retrograde protein (GARP) complex to the trans-Golgi network and controls early endosome-to-Golgi transport of internalized protein. Promotes the recycling of internalized transferrin receptor (TFRC) to the plasma membrane through interaction with endosome-associated recycling protein (EARP) complex. Controls proper insulin distribution and secretion, and retention of cargo in mature dense core vesicles. Required for the stability of the endosome-associated retrograde protein (EARP) complex subunits and for proper localization and association of EARP with membranes. This chain is EARP and GARP complex-interacting protein 1, found in Rattus norvegicus (Rat).